A 311-amino-acid polypeptide reads, in one-letter code: 4-diphosphocytidyl-2-C-methyl-D-erythritol kinase (311 aa).

Residue Lys11 is part of the active site. 94-104 serves as a coordination point for ATP; that stretch reads PVAAGLAGGSA. Asp136 is an active-site residue.

Belongs to the GHMP kinase family. IspE subfamily.

The catalysed reaction is 4-CDP-2-C-methyl-D-erythritol + ATP = 4-CDP-2-C-methyl-D-erythritol 2-phosphate + ADP + H(+). It functions in the pathway isoprenoid biosynthesis; isopentenyl diphosphate biosynthesis via DXP pathway; isopentenyl diphosphate from 1-deoxy-D-xylulose 5-phosphate: step 3/6. Functionally, catalyzes the phosphorylation of the position 2 hydroxy group of 4-diphosphocytidyl-2C-methyl-D-erythritol. This is 4-diphosphocytidyl-2-C-methyl-D-erythritol kinase from Synechococcus sp. (strain JA-2-3B'a(2-13)) (Cyanobacteria bacterium Yellowstone B-Prime).